Reading from the N-terminus, the 209-residue chain is Uracil phosphoribosyltransferase (209 aa).

5-phospho-alpha-D-ribose 1-diphosphate-binding positions include arginine 79, arginine 104, and 131-139 (DPMLATGGS). Uracil-binding positions include isoleucine 194 and 199–201 (GDA). Aspartate 200 lines the 5-phospho-alpha-D-ribose 1-diphosphate pocket.

Belongs to the UPRTase family. Requires Mg(2+) as cofactor.

The enzyme catalyses UMP + diphosphate = 5-phospho-alpha-D-ribose 1-diphosphate + uracil. The protein operates within pyrimidine metabolism; UMP biosynthesis via salvage pathway; UMP from uracil: step 1/1. Allosterically activated by GTP. Functionally, catalyzes the conversion of uracil and 5-phospho-alpha-D-ribose 1-diphosphate (PRPP) to UMP and diphosphate. The polypeptide is Uracil phosphoribosyltransferase (Natranaerobius thermophilus (strain ATCC BAA-1301 / DSM 18059 / JW/NM-WN-LF)).